A 290-amino-acid polypeptide reads, in one-letter code: 4-hydroxybenzoate octaprenyltransferase (290 aa).

The next 8 membrane-spanning stretches (helical) occupy residues 23–43, 46–66, 99–119, 141–161, 163–183, 212–232, 233–253, and 268–288; these read IGAL…TPGM, LWIL…GCVV, LFVV…AMTI, LPQV…FAAV, ESLP…AVAY, TLII…IGWL, NGLG…FVYQ, and AFMN…MSYW.

The protein belongs to the UbiA prenyltransferase family. Mg(2+) is required as a cofactor.

It is found in the cell inner membrane. It carries out the reaction all-trans-octaprenyl diphosphate + 4-hydroxybenzoate = 4-hydroxy-3-(all-trans-octaprenyl)benzoate + diphosphate. It functions in the pathway cofactor biosynthesis; ubiquinone biosynthesis. Its function is as follows. Catalyzes the prenylation of para-hydroxybenzoate (PHB) with an all-trans polyprenyl group. Mediates the second step in the final reaction sequence of ubiquinone-8 (UQ-8) biosynthesis, which is the condensation of the polyisoprenoid side chain with PHB, generating the first membrane-bound Q intermediate 3-octaprenyl-4-hydroxybenzoate. The polypeptide is 4-hydroxybenzoate octaprenyltransferase (Salmonella paratyphi C (strain RKS4594)).